The primary structure comprises 378 residues: Mannitol-1-phosphate 5-dehydrogenase (378 aa).

4-15 (SVHFGAGNIGRG) lines the NAD(+) pocket.

Belongs to the mannitol dehydrogenase family.

It carries out the reaction D-mannitol 1-phosphate + NAD(+) = beta-D-fructose 6-phosphate + NADH + H(+). This is Mannitol-1-phosphate 5-dehydrogenase from Streptococcus pneumoniae (strain Hungary19A-6).